Reading from the N-terminus, the 457-residue chain is Adenylosuccinate synthetase isozyme 2 (457 aa).

Residues 40–46 and 68–70 contribute to the GTP site; these read GDEGKGK and GHT. D41 functions as the Proton acceptor in the catalytic mechanism. Mg(2+) is bound by residues D41 and G68. Residue D41 coordinates substrate. Residues 41–44, 66–69, T163, R177, N256, T271, and R335 contribute to the IMP site; these read DEGK and NAGH. Catalysis depends on H69, which acts as the Proton donor. 331–337 lines the substrate pocket; the sequence is VTTGRKR. GTP is bound by residues R337, 363 to 365, and 445 to 448; these read KLD and GVGK.

It belongs to the adenylosuccinate synthetase family. As to quaternary structure, homodimer. It depends on Mg(2+) as a cofactor.

The protein localises to the cytoplasm. It is found in the mitochondrion. The catalysed reaction is IMP + L-aspartate + GTP = N(6)-(1,2-dicarboxyethyl)-AMP + GDP + phosphate + 2 H(+). It functions in the pathway purine metabolism; AMP biosynthesis via de novo pathway; AMP from IMP: step 1/2. Inhibited competitively by AMP and IMP and non-competitively by fructose 1,6-bisphosphate. In terms of biological role, plays an important role in the de novo pathway and in the salvage pathway of purine nucleotide biosynthesis. Catalyzes the first committed step in the biosynthesis of AMP from IMP. The chain is Adenylosuccinate synthetase isozyme 2 (adss2) from Xenopus laevis (African clawed frog).